The sequence spans 594 residues: Microtubule-associated protein VP8 (594 aa).

The protein localises to the virion. The protein resides in the host cytoplasm. Its subcellular location is the host cytoskeleton. In terms of biological role, minor inner capsid component. Displays NTPase and RNA 5'-triphosphatase (RTPase) activities. May function as a cofactor of polymerase VP1. Associates with microtubules and plays a role in the formation, structural organization and morphology of viral inclusions, where the assembly of cores and the replication of viral RNA occur. The chain is Microtubule-associated protein VP8 (S8) from Saccharum officinarum (Sugarcane).